The primary structure comprises 208 residues: FMN-dependent NADH:quinone oxidoreductase (208 aa).

FMN-binding positions include Ser-10, 16 to 18 (SVS), 94 to 97 (MYNF), and 138 to 141 (SRGG).

Belongs to the azoreductase type 1 family. As to quaternary structure, homodimer. The cofactor is FMN.

It carries out the reaction 2 a quinone + NADH + H(+) = 2 a 1,4-benzosemiquinone + NAD(+). The enzyme catalyses N,N-dimethyl-1,4-phenylenediamine + anthranilate + 2 NAD(+) = 2-(4-dimethylaminophenyl)diazenylbenzoate + 2 NADH + 2 H(+). Quinone reductase that provides resistance to thiol-specific stress caused by electrophilic quinones. Functionally, also exhibits azoreductase activity. Catalyzes the reductive cleavage of the azo bond in aromatic azo compounds to the corresponding amines. The chain is FMN-dependent NADH:quinone oxidoreductase from Hyphomonas neptunium (strain ATCC 15444).